The primary structure comprises 525 residues: Endoglucanase 10 (525 aa).

The signal sequence occupies residues 1–26; the sequence is MEEKSKSRGWCGWFIAIIVLASVILA. Residue Asp-109 is the Nucleophile of the active site. Residue Asn-259 is glycosylated (N-linked (GlcNAc...) asparagine). Residue His-442 is part of the active site. Residues Asn-464 and Asn-484 are each glycosylated (N-linked (GlcNAc...) asparagine). Residues Asp-489 and Glu-498 contribute to the active site.

The protein belongs to the glycosyl hydrolase 9 (cellulase E) family.

It is found in the secreted. The enzyme catalyses Endohydrolysis of (1-&gt;4)-beta-D-glucosidic linkages in cellulose, lichenin and cereal beta-D-glucans.. The chain is Endoglucanase 10 from Arabidopsis thaliana (Mouse-ear cress).